The following is a 180-amino-acid chain: Large ribosomal subunit protein uL5 (180 aa).

The protein belongs to the universal ribosomal protein uL5 family. In terms of assembly, part of the 50S ribosomal subunit; part of the 5S rRNA/L5/L18/L25 subcomplex. Contacts the 5S rRNA and the P site tRNA. Forms a bridge to the 30S subunit in the 70S ribosome.

In terms of biological role, this is one of the proteins that bind and probably mediate the attachment of the 5S RNA into the large ribosomal subunit, where it forms part of the central protuberance. In the 70S ribosome it contacts protein S13 of the 30S subunit (bridge B1b), connecting the 2 subunits; this bridge is implicated in subunit movement. Contacts the P site tRNA; the 5S rRNA and some of its associated proteins might help stabilize positioning of ribosome-bound tRNAs. The sequence is that of Large ribosomal subunit protein uL5 from Cupriavidus metallidurans (strain ATCC 43123 / DSM 2839 / NBRC 102507 / CH34) (Ralstonia metallidurans).